We begin with the raw amino-acid sequence, 153 residues long: Small ribosomal subunit protein bS16 (153 aa).

Positions 130–153 are disordered; sequence EAEAAAAAEEAPAEEAAEEAPAEA. A compositionally biased stretch (acidic residues) spans 140-153; that stretch reads APAEEAAEEAPAEA.

It belongs to the bacterial ribosomal protein bS16 family.

This is Small ribosomal subunit protein bS16 from Bifidobacterium longum subsp. infantis (strain ATCC 15697 / DSM 20088 / JCM 1222 / NCTC 11817 / S12).